The sequence spans 205 residues: Thymidine kinase (205 aa).

Residues 9–16 (SAMNAGKT) and 88–91 (DECH) contribute to the ATP site. E89 acts as the Proton acceptor in catalysis. Residues C146, C148, C183, and H186 each coordinate Zn(2+).

It belongs to the thymidine kinase family. Homotetramer.

Its subcellular location is the cytoplasm. The catalysed reaction is thymidine + ATP = dTMP + ADP + H(+). This is Thymidine kinase from Blochmanniella pennsylvanica (strain BPEN).